We begin with the raw amino-acid sequence, 245 residues long: 8-amino-3,8-dideoxy-manno-octulosonate cytidylyltransferase (245 aa).

This sequence belongs to the KdsB family.

The protein resides in the cytoplasm. It carries out the reaction 8-amino-3,8-dideoxy-alpha-D-manno-octulosonate + CTP = CMP-8-amino-3,8-dideoxy-alpha-D-manno-oct-2-ulosonate + diphosphate. It functions in the pathway bacterial outer membrane biogenesis; lipopolysaccharide biosynthesis. Activates KDO8N (a required 8-carbon sugar) for incorporation into bacterial lipopolysaccharide in the Shewanella genus. This is 8-amino-3,8-dideoxy-manno-octulosonate cytidylyltransferase from Shewanella pealeana (strain ATCC 700345 / ANG-SQ1).